We begin with the raw amino-acid sequence, 722 residues long: MFDTTPHSGRSSPSSSPSLRKRLQLLPPIRPPPASEPEPGTMVEKGSDSSSEKSGVSGTLSTQSLGSRNFIRNSKKMQSWYSMLCPTYKQRNEDFRKLFSKLPEAERLIVDYSCALQREILLQGRLYLSENWICFYSNIFRWETTISIQLKEVTCLKKEKTAKLIPNAIQICTESEKHFFTSFGARDRCFLLIFRLWQNALLEKTLSPRELWHLVHQCYGSELGLTSEDEDYVCPLQLNGLGSPKEVGDVIALSDISPSGAADHSQEPSPVGSRRGRVTPNLSRASSDADHGAEEDKEEQTDGLDASSSQTVTPVAEPLSSEPTPPDGPTSSLGPLDLLSREELLTDTSNSSSSTGEEGDLAALLPDLSGRLLINSVFHMGAERLQQMLFSDSPFLQGFLQQRKFTDVTLSPWSSDSKCHQRRVLTYTIPISNQLGPKSASVVETQTLFRRGPQAGGCVVDSEVLTQGIPYQDYFYTAHRYCILGLARNKARLRVSSEIRYRKQPWSLVKSLIEKNSWSGIEDYFHHLDRELAKAEKLSLEEGGKDTRGLLSGLRRRKRPLSWRGHRDGPQHPDPDPCTQTSMHTSGSLSSRFSEPSVDQGPGAGIPSALVLISIVLIVLIALNALLFYRLWSLERTAHTFESWHSLALAKGKFPQTATEWAEILALQKHFHSVEVHKWRQILRASVELLDEMKFSLEKLHQGITVPDPPLDTQPQPDDSFP.

Residues Met1 to Thr62 form a disordered region. Residues Ser8–Ser18 are compositionally biased toward low complexity. Positions Glu93–Lys160 constitute a GRAM domain. The segment at Ile256 to Leu336 is disordered. Phosphoserine is present on residues Ser265, Ser269, Ser273, and Ser417. The VASt domain maps to Ser369 to Leu540. The tract at residues Leu561 to Gln600 is disordered. Residues Gly565 to Pro575 are compositionally biased toward basic and acidic residues. Positions Cys578–Ser594 are enriched in polar residues. A helical membrane pass occupies residues Ala609–Tyr629.

Highly expressed in the brain.

The protein resides in the endoplasmic reticulum membrane. Its subcellular location is the cell membrane. The protein localises to the cytoplasmic vesicle. It localises to the autophagosome. In terms of biological role, cholesterol transporter that mediates non-vesicular transport of cholesterol from the plasma membrane (PM) to the endoplasmic reticulum (ER). Contains unique domains for binding cholesterol and the PM, thereby serving as a molecular bridge for the transfer of cholesterol from the PM to the ER. Plays a crucial role in cholesterol homeostasis and has the unique ability to localize to the PM based on the level of membrane cholesterol. In lipid-poor conditions localizes to the ER membrane and in response to excess cholesterol in the PM is recruited to the endoplasmic reticulum-plasma membrane contact sites (EPCS) which is mediated by the GRAM domain. At the EPCS, the sterol-binding VASt/ASTER domain binds to the cholesterol in the PM and facilitates its transfer from the PM to ER. May play a role in tumor progression. Plays a role in autophagy regulation and is required for biogenesis of the autophagosome. This function in autophagy requires its cholesterol-transfer activity. This Mus musculus (Mouse) protein is Protein Aster-A.